The following is a 73-amino-acid chain: Kappa-scoloptoxin(03)-Ssm1c (73 aa).

The N-terminal stretch at 1–23 (MKSWMAILLVMALIIFTLDNCYS) is a signal peptide. Cystine bridges form between Cys32–Cys58, Cys41–Cys57, and Cys44–Cys67.

Belongs to the scoloptoxin family. In terms of tissue distribution, expressed by the venom gland.

The protein resides in the secreted. Inhibits voltage-gated potassium channels. This chain is Kappa-scoloptoxin(03)-Ssm1c, found in Scolopendra mutilans (Chinese red-headed centipede).